A 160-amino-acid polypeptide reads, in one-letter code: NADH-quinone oxidoreductase subunit I (160 aa).

2 4Fe-4S ferredoxin-type domains span residues Arg-51–Ala-80 and Thr-91–Asn-120. Positions 60, 63, 66, 70, 100, 103, 106, and 110 each coordinate [4Fe-4S] cluster.

The protein belongs to the complex I 23 kDa subunit family. NDH-1 is composed of 14 different subunits. Subunits NuoA, H, J, K, L, M, N constitute the membrane sector of the complex. Requires [4Fe-4S] cluster as cofactor.

The protein resides in the cell inner membrane. The catalysed reaction is a quinone + NADH + 5 H(+)(in) = a quinol + NAD(+) + 4 H(+)(out). NDH-1 shuttles electrons from NADH, via FMN and iron-sulfur (Fe-S) centers, to quinones in the respiratory chain. The immediate electron acceptor for the enzyme in this species is believed to be ubiquinone. Couples the redox reaction to proton translocation (for every two electrons transferred, four hydrogen ions are translocated across the cytoplasmic membrane), and thus conserves the redox energy in a proton gradient. The chain is NADH-quinone oxidoreductase subunit I from Neorickettsia sennetsu (strain ATCC VR-367 / Miyayama) (Ehrlichia sennetsu).